A 644-amino-acid chain; its full sequence is Sodium/hydrogen exchanger 9 (644 aa).

Residues 1–20 (MAGQLRLTSGKDEDHFQHQG) are Lumenal-facing. The helical transmembrane segment at 21-41 (AVELLAFNFLLILTILTIWLF) threads the bilayer. Over 42 to 45 (KNHR) the chain is Cytoplasmic. A helical transmembrane segment spans residues 46-66 (FRFLHETGGAMVYGLIMGLIL). At 67 to 126 (RYATAPTDIDSGTVYNCGKLLFSPSTLLVNITDQVYEYKYQREINQHNISPHQGNAILEK) the chain is on the lumenal side. A helical membrane pass occupies residues 127–147 (MTFDPEIFFNVLLPPIIFHAG). Residues 148–164 (YSLKKRHFFQNLGSILT) are Cytoplasmic-facing. A helical membrane pass occupies residues 165–185 (YAFLGTAISCVVIGLIMYGFV). Over 186–203 (KAMVHAGQLKSGDFHFTD) the chain is Lumenal. Residues 204-224 (CLFFGSLMSATDPVTVLAIFH) form a helical membrane-spanning segment. Topologically, residues 225 to 235 (ELHVDPDLYTL) are cytoplasmic. The chain crosses the membrane as a helical span at residues 236–256 (LFGESVLNDAVAIVLTYSISI). Residues 257 to 277 (YSPKENPNAFDTAAFFQSVGN) are Lumenal-facing. A helical membrane pass occupies residues 278-298 (FLGIFAGSFAMGSAYAVVTAL). Over 299–309 (LTKFTKLREFP) the chain is Cytoplasmic. A helical transmembrane segment spans residues 310 to 327 (MLETGLFFLLSWSAFLSA). At 328–333 (EAAGLT) the chain is on the lumenal side. A helical membrane pass occupies residues 334-350 (GIVAVLFCGVTQAHYTY). Residues 351 to 364 (NNLSSDSKLRTKQL) lie on the Cytoplasmic side of the membrane. A helical transmembrane segment spans residues 365 to 385 (FEFMNFLAENVIFCYMGLALF). Residue T386 is a topological domain, lumenal. Residues 387 to 407 (FQNHIFNALFILGAFLAIFVA) form a helical membrane-spanning segment. The Cytoplasmic portion of the chain corresponds to 408-429 (RACNIYPLSFLLNLGRKQKIPW). A helical membrane pass occupies residues 430-450 (NFQHMMMFSGLRGAIAFALAI). The Lumenal portion of the chain corresponds to 451–465 (RNTESQPKQMMFTTT). A helical membrane pass occupies residues 466 to 486 (LLLVFFTVWVFGGGTTPMLTW). Residues 487–644 (LQIRVGVDLD…EQTRGQPQMD (158 aa)) are Cytoplasmic-facing.

It belongs to the monovalent cation:proton antiporter 1 (CPA1) transporter (TC 2.A.36) family. In terms of assembly, homodimer; phosphatidylinositol-4,5-bisphosphate (PIP2) and phosphatidylinositol 3,4,5-trisphosphate (PIP3) could be involved in the dimer stabilization. Interacts (via the C-terminus) with RACK1. Interacts with CHP1. In terms of tissue distribution, expressed in hair bundles and in vestibular hair bundles. Expressed in brain.

It is found in the late endosome membrane. Its subcellular location is the early endosome membrane. It localises to the recycling endosome membrane. The protein resides in the cell membrane. The protein localises to the cytoplasmic vesicle. It is found in the phagosome membrane. The enzyme catalyses Na(+)(in) + H(+)(out) = Na(+)(out) + H(+)(in). It carries out the reaction K(+)(in) + H(+)(out) = K(+)(out) + H(+)(in). Its function is as follows. Endosomal Na(+), K(+)/H(+) antiporter. Mediates the electroneutral exchange of endosomal luminal H(+) for a cytosolic Na(+) or K(+). By facilitating proton efflux, SLC9A9 counteracts the acidity generated by vacuolar (V)-ATPase, thereby limiting luminal acidification. Regulates organellar pH and consequently, endosome maturation and endocytic trafficking of plasma membrane receptors and neurotransporters. Promotes the recycling of transferrin receptors back to the cell surface to facilitate additional iron uptake in the brain. Regulates synaptic transmission by regulating the luminal pH of axonal endosomes. Regulates phagosome lumenal pH, thus affecting phagosome maturation, and consequently, microbicidal activity in macrophages. Can also be active at the cell surface of specialized cells, e.g., in the inner ear hair bundles uses the high K(+) of the endolymph to regulate intracelular pH. This is Sodium/hydrogen exchanger 9 (Slc9a9) from Rattus norvegicus (Rat).